A 180-amino-acid chain; its full sequence is ATP synthase subunit delta (180 aa).

It belongs to the ATPase delta chain family. In terms of assembly, F-type ATPases have 2 components, F(1) - the catalytic core - and F(0) - the membrane proton channel. F(1) has five subunits: alpha(3), beta(3), gamma(1), delta(1), epsilon(1). F(0) has three main subunits: a(1), b(2) and c(10-14). The alpha and beta chains form an alternating ring which encloses part of the gamma chain. F(1) is attached to F(0) by a central stalk formed by the gamma and epsilon chains, while a peripheral stalk is formed by the delta and b chains.

It localises to the cell membrane. Its function is as follows. F(1)F(0) ATP synthase produces ATP from ADP in the presence of a proton or sodium gradient. F-type ATPases consist of two structural domains, F(1) containing the extramembraneous catalytic core and F(0) containing the membrane proton channel, linked together by a central stalk and a peripheral stalk. During catalysis, ATP synthesis in the catalytic domain of F(1) is coupled via a rotary mechanism of the central stalk subunits to proton translocation. In terms of biological role, this protein is part of the stalk that links CF(0) to CF(1). It either transmits conformational changes from CF(0) to CF(1) or is implicated in proton conduction. In Latilactobacillus sakei subsp. sakei (strain 23K) (Lactobacillus sakei subsp. sakei), this protein is ATP synthase subunit delta.